Here is a 170-residue protein sequence, read N- to C-terminus: MATVTSAAVAIPSFTGLKAGASSSSRVSTGASAKVAAAPVARLTVKASLKDVGAVVAATAVSAMLASNAMALEVLLGGDDGSLAFIPGNFSVSAGEKITFKNNAGFPHNVVFDEDEIPAGVDASKISMSEEDLLNAAGETYSVTLSEKGTYTFYCAPHQGAGMVGKVTVN.

Residues Met-1 to Ala-71 constitute a chloroplast transit peptide. In terms of domain architecture, Plastocyanin-like spans Leu-72 to Asn-170. Cu cation-binding residues include His-108, Cys-155, His-158, and Met-163.

The protein belongs to the plastocyanin family. Cu(2+) serves as cofactor.

Its subcellular location is the plastid. It localises to the chloroplast thylakoid membrane. In terms of biological role, participates in electron transfer between P700 and the cytochrome b6-f complex in photosystem I. The chain is Plastocyanin, chloroplastic (PETE) from Solanum lycopersicum (Tomato).